Consider the following 114-residue polypeptide: Tyrosine-protein phosphatase 11 (114 aa).

Residues 1–114 (WRMIWEHNTR…EAKHTGPTIV (114 aa)) form the Tyrosine-protein phosphatase domain. Residue Asp-81 coordinates substrate.

This sequence belongs to the protein-tyrosine phosphatase family.

It carries out the reaction O-phospho-L-tyrosyl-[protein] + H2O = L-tyrosyl-[protein] + phosphate. The polypeptide is Tyrosine-protein phosphatase 11 (STY-11) (Styela plicata (Wrinkled sea squirt)).